A 58-amino-acid chain; its full sequence is Small ribosomal subunit protein uS14 (58 aa).

A disordered region spans residues 1–21 (MSESETEQTGEHASHRTGQTH). Residues 9–21 (TGEHASHRTGQTH) show a composition bias toward basic and acidic residues. Residues Cys23, Cys26, Cys41, and Cys44 each coordinate Zn(2+).

The protein belongs to the universal ribosomal protein uS14 family. Zinc-binding uS14 subfamily. As to quaternary structure, part of the 30S ribosomal subunit. The cofactor is Zn(2+).

In terms of biological role, binds 16S rRNA, required for the assembly of 30S particles. This chain is Small ribosomal subunit protein uS14, found in Haloquadratum walsbyi (strain DSM 16790 / HBSQ001).